A 143-amino-acid chain; its full sequence is Large ribosomal subunit protein uL11 (143 aa).

The protein belongs to the universal ribosomal protein uL11 family. In terms of assembly, part of the ribosomal stalk of the 50S ribosomal subunit. Interacts with L10 and the large rRNA to form the base of the stalk. L10 forms an elongated spine to which L12 dimers bind in a sequential fashion forming a multimeric L10(L12)X complex. Post-translationally, one or more lysine residues are methylated.

Forms part of the ribosomal stalk which helps the ribosome interact with GTP-bound translation factors. In Leptothrix cholodnii (strain ATCC 51168 / LMG 8142 / SP-6) (Leptothrix discophora (strain SP-6)), this protein is Large ribosomal subunit protein uL11.